The primary structure comprises 375 residues: 23S rRNA (uracil(747)-C(5))-methyltransferase RlmC (375 aa).

Residues cysteine 3, cysteine 11, cysteine 14, and cysteine 87 each contribute to the [4Fe-4S] cluster site. S-adenosyl-L-methionine is bound by residues glutamine 212, phenylalanine 241, glutamate 262, and asparagine 307. The active-site Nucleophile is cysteine 334.

This sequence belongs to the class I-like SAM-binding methyltransferase superfamily. RNA M5U methyltransferase family. RlmC subfamily.

It carries out the reaction uridine(747) in 23S rRNA + S-adenosyl-L-methionine = 5-methyluridine(747) in 23S rRNA + S-adenosyl-L-homocysteine + H(+). Catalyzes the formation of 5-methyl-uridine at position 747 (m5U747) in 23S rRNA. The protein is 23S rRNA (uracil(747)-C(5))-methyltransferase RlmC of Shigella boydii serotype 18 (strain CDC 3083-94 / BS512).